Here is a 299-residue protein sequence, read N- to C-terminus: MTESTTSSPHDAVFKTFMFTPETARDFLEIHLPEPLRKLCNLQTLRLEPTSFIEKSLRAYYSDVLWSVETSDGDGYIYCVIEHQSSAEKNMAFRLMRYATAAMQRHQDKGYDRVPLVVPLLFYHGETSPYPYSLNWLDEFDDPQLARQLYTEAFLLVDITIVPDDEIMQHRRIALLELIQKHIRDRDLIGMVDRITTLLVRGFTNDSQLQTLFNYLLQCGDTSRFTRFIEEIAERSPLQKERLMTIAERLRQEGHQIGWQEGMHEQAIKIALRMLEQGFEREIVLATTQLTDADIPNCH.

It belongs to the Rpn/YhgA-like nuclease family.

In terms of biological role, upon expression has no effect on RecA-independent DNA recombination, cell viability or DNA damage. The chain is Inactive recombination-promoting nuclease-like protein RpnE (yfaD) from Escherichia coli (strain K12).